The primary structure comprises 299 residues: Dihydroorotate dehydrogenase B (NAD(+)), catalytic subunit (299 aa).

FMN contacts are provided by residues Ser21 and 44 to 45; that span reads KS. Substrate contacts are provided by residues Lys44, 68–72, and Asn125; that span reads NAVGL. Position 125 (Asn125) interacts with FMN. Catalysis depends on Cys128, which acts as the Nucleophile. Residue Lys163 coordinates FMN. 189-190 serves as a coordination point for substrate; the sequence is NT. Residues Gly214, 240–241, and 262–263 each bind FMN; these read GG and GS.

Belongs to the dihydroorotate dehydrogenase family. Type 1 subfamily. Heterotetramer of 2 PyrK and 2 PyrD type B subunits. It depends on FMN as a cofactor.

It is found in the cytoplasm. The enzyme catalyses (S)-dihydroorotate + NAD(+) = orotate + NADH + H(+). It participates in pyrimidine metabolism; UMP biosynthesis via de novo pathway; orotate from (S)-dihydroorotate (NAD(+) route): step 1/1. In terms of biological role, catalyzes the conversion of dihydroorotate to orotate with NAD(+) as electron acceptor. The sequence is that of Dihydroorotate dehydrogenase B (NAD(+)), catalytic subunit (pyrD) from Archaeoglobus fulgidus (strain ATCC 49558 / DSM 4304 / JCM 9628 / NBRC 100126 / VC-16).